We begin with the raw amino-acid sequence, 246 residues long: tRNA (guanine-N(1)-)-methyltransferase (246 aa).

S-adenosyl-L-methionine contacts are provided by residues Gly117 and 137-142; that span reads IGDYVL.

Belongs to the RNA methyltransferase TrmD family. Homodimer.

The protein resides in the cytoplasm. The enzyme catalyses guanosine(37) in tRNA + S-adenosyl-L-methionine = N(1)-methylguanosine(37) in tRNA + S-adenosyl-L-homocysteine + H(+). Specifically methylates guanosine-37 in various tRNAs. The polypeptide is tRNA (guanine-N(1)-)-methyltransferase (Acinetobacter baumannii (strain AB307-0294)).